The sequence spans 293 residues: 3-hydroxybutyryl-CoA dehydrogenase (293 aa).

The protein belongs to the 3-hydroxyacyl-CoA dehydrogenase family.

The catalysed reaction is (3S)-3-hydroxybutanoyl-CoA + NADP(+) = acetoacetyl-CoA + NADPH + H(+). It participates in lipid metabolism; butanoate metabolism. This is 3-hydroxybutyryl-CoA dehydrogenase (hbdA) from Bradyrhizobium diazoefficiens (strain JCM 10833 / BCRC 13528 / IAM 13628 / NBRC 14792 / USDA 110).